A 274-amino-acid polypeptide reads, in one-letter code: Large ribosomal subunit protein uL2 (274 aa).

A disordered region spans residues 223–274; that stretch reads VAMNPVDHPHGGGEGRTSGGRHPVSPWGMPTKGFKTRKNKSTDKYIVRRRNK.

Belongs to the universal ribosomal protein uL2 family. Part of the 50S ribosomal subunit. Forms a bridge to the 30S subunit in the 70S ribosome.

Functionally, one of the primary rRNA binding proteins. Required for association of the 30S and 50S subunits to form the 70S ribosome, for tRNA binding and peptide bond formation. It has been suggested to have peptidyltransferase activity; this is somewhat controversial. Makes several contacts with the 16S rRNA in the 70S ribosome. In Aliivibrio fischeri (strain ATCC 700601 / ES114) (Vibrio fischeri), this protein is Large ribosomal subunit protein uL2.